A 73-amino-acid chain; its full sequence is Putative membrane protein insertion efficiency factor (73 aa).

This sequence belongs to the UPF0161 family.

It localises to the cell inner membrane. In terms of biological role, could be involved in insertion of integral membrane proteins into the membrane. The sequence is that of Putative membrane protein insertion efficiency factor from Parabacteroides distasonis (strain ATCC 8503 / DSM 20701 / CIP 104284 / JCM 5825 / NCTC 11152).